A 216-amino-acid chain; its full sequence is Probable transaldolase (216 aa).

The active-site Schiff-base intermediate with substrate is the Lys83.

It belongs to the transaldolase family. Type 3B subfamily.

It localises to the cytoplasm. The enzyme catalyses D-sedoheptulose 7-phosphate + D-glyceraldehyde 3-phosphate = D-erythrose 4-phosphate + beta-D-fructose 6-phosphate. It participates in carbohydrate degradation; pentose phosphate pathway; D-glyceraldehyde 3-phosphate and beta-D-fructose 6-phosphate from D-ribose 5-phosphate and D-xylulose 5-phosphate (non-oxidative stage): step 2/3. Its function is as follows. Transaldolase is important for the balance of metabolites in the pentose-phosphate pathway. This is Probable transaldolase from Thermosipho africanus (strain TCF52B).